A 197-amino-acid polypeptide reads, in one-letter code: Auxin-responsive protein IAA31 (197 aa).

2 disordered regions span residues 1-43 (MENL…DQAK) and 66-90 (SCLQ…ETQQ). Residues 9-13 (LRLGL) carry the EAR-like (transcriptional repression) motif. The region spanning 99–186 (GLFVKVSMDG…TCKRLRIMKG (88 aa)) is the PB1 domain.

This sequence belongs to the Aux/IAA family. In terms of assembly, homodimers and heterodimers. Highly expressed in etiolated seedlings. Expressed in roots.

It localises to the nucleus. Functionally, aux/IAA proteins are short-lived transcriptional factors that function as repressors of early auxin response genes at low auxin concentrations. The protein is Auxin-responsive protein IAA31 (IAA31) of Oryza sativa subsp. japonica (Rice).